A 208-amino-acid chain; its full sequence is Small ribosomal subunit protein uS4 (208 aa).

The S4 RNA-binding domain occupies 95-155 (TRLDALVLRA…AKSQTMVPFQ (61 aa)).

Belongs to the universal ribosomal protein uS4 family. In terms of assembly, part of the 30S ribosomal subunit. Contacts protein S5. The interaction surface between S4 and S5 is involved in control of translational fidelity.

One of the primary rRNA binding proteins, it binds directly to 16S rRNA where it nucleates assembly of the body of the 30S subunit. Functionally, with S5 and S12 plays an important role in translational accuracy. The chain is Small ribosomal subunit protein uS4 from Bifidobacterium adolescentis (strain ATCC 15703 / DSM 20083 / NCTC 11814 / E194a).